A 444-amino-acid polypeptide reads, in one-letter code: Protein Z-dependent protease inhibitor (444 aa).

A signal peptide spans 1–21 (MKVVPSLLLSVLLAQVWLVPG). The disordered stretch occupies residues 24–65 (PSPQSPETPAPQNQTSRVVQAPKEEEEDEQEASEEKASEEEK). N36 carries an N-linked (GlcNAc...) asparagine glycan. Position 56 is a phosphoserine; by FAM20C (S56). Positions 56–65 (SEEKASEEEK) are enriched in basic and acidic residues. The tract at residues 136 to 153 (TKPGLLPSLFKGLRETLS) is heparin-binding. N-linked (GlcNAc...) asparagine glycosylation is found at N180, N197, and N295.

It belongs to the serpin family. Interacts with PROZ. In terms of processing, phosphorylated by FAM20C in the extracellular medium. In terms of tissue distribution, expressed by the liver and secreted in plasma.

It is found in the secreted. Inhibits activity of the coagulation protease factor Xa in the presence of PROZ, calcium and phospholipids. Also inhibits factor XIa in the absence of cofactors. The sequence is that of Protein Z-dependent protease inhibitor (SERPINA10) from Homo sapiens (Human).